The following is a 491-amino-acid chain: Glycogen synthase (491 aa).

ADP-alpha-D-glucose is bound at residue Lys-15.

This sequence belongs to the glycosyltransferase 1 family. Bacterial/plant glycogen synthase subfamily.

The enzyme catalyses [(1-&gt;4)-alpha-D-glucosyl](n) + ADP-alpha-D-glucose = [(1-&gt;4)-alpha-D-glucosyl](n+1) + ADP + H(+). It participates in glycan biosynthesis; glycogen biosynthesis. Its function is as follows. Synthesizes alpha-1,4-glucan chains using ADP-glucose. The protein is Glycogen synthase of Treponema denticola (strain ATCC 35405 / DSM 14222 / CIP 103919 / JCM 8153 / KCTC 15104).